A 191-amino-acid polypeptide reads, in one-letter code: ATP synthase subunit b 2 (191 aa).

Residues 1-12 (MAESHGEAKGGE) show a composition bias toward basic and acidic residues. Residues 1–31 (MAESHGEAKGGEAKGTASAHTEAEGGHGFPP) are disordered. The helical transmembrane segment at 38–60 (PSQIASLVIAFVALYVIVSRVAL) threads the bilayer.

The protein belongs to the ATPase B chain family. F-type ATPases have 2 components, F(1) - the catalytic core - and F(0) - the membrane proton channel. F(1) has five subunits: alpha(3), beta(3), gamma(1), delta(1), epsilon(1). F(0) has three main subunits: a(1), b(2) and c(10-14). The alpha and beta chains form an alternating ring which encloses part of the gamma chain. F(1) is attached to F(0) by a central stalk formed by the gamma and epsilon chains, while a peripheral stalk is formed by the delta and b chains.

It is found in the cell inner membrane. In terms of biological role, f(1)F(0) ATP synthase produces ATP from ADP in the presence of a proton or sodium gradient. F-type ATPases consist of two structural domains, F(1) containing the extramembraneous catalytic core and F(0) containing the membrane proton channel, linked together by a central stalk and a peripheral stalk. During catalysis, ATP synthesis in the catalytic domain of F(1) is coupled via a rotary mechanism of the central stalk subunits to proton translocation. Its function is as follows. Component of the F(0) channel, it forms part of the peripheral stalk, linking F(1) to F(0). The b'-subunit is a diverged and duplicated form of b found in plants and photosynthetic bacteria. The protein is ATP synthase subunit b 2 (atpF2) of Bradyrhizobium sp. (strain ORS 278).